We begin with the raw amino-acid sequence, 332 residues long: Fructose-1,6-bisphosphatase class 1 (332 aa).

4 residues coordinate Mg(2+): E91, D112, L114, and D115. Substrate-binding positions include 115-118, N208, Y241, and K271; that span reads DGSS. E277 provides a ligand contact to Mg(2+).

This sequence belongs to the FBPase class 1 family. As to quaternary structure, homotetramer. Mg(2+) serves as cofactor.

The protein resides in the cytoplasm. It carries out the reaction beta-D-fructose 1,6-bisphosphate + H2O = beta-D-fructose 6-phosphate + phosphate. Its pathway is carbohydrate biosynthesis; Calvin cycle. The protein is Fructose-1,6-bisphosphatase class 1 of Chlorobium phaeobacteroides (strain DSM 266 / SMG 266 / 2430).